The sequence spans 415 residues: Imidazolonepropionase (415 aa).

Fe(3+) is bound by residues H80 and H82. The Zn(2+) site is built by H80 and H82. 4-imidazolone-5-propanoate-binding residues include R89, Y152, and H185. N-formimidoyl-L-glutamate is bound at residue Y152. H250 contributes to the Fe(3+) binding site. Position 250 (H250) interacts with Zn(2+). Q253 lines the 4-imidazolone-5-propanoate pocket. Position 325 (D325) interacts with Fe(3+). D325 lines the Zn(2+) pocket. N-formimidoyl-L-glutamate is bound by residues N327 and G329. T330 contributes to the 4-imidazolone-5-propanoate binding site.

This sequence belongs to the metallo-dependent hydrolases superfamily. HutI family. Zn(2+) serves as cofactor. The cofactor is Fe(3+).

The protein resides in the cytoplasm. It carries out the reaction 4-imidazolone-5-propanoate + H2O = N-formimidoyl-L-glutamate. It functions in the pathway amino-acid degradation; L-histidine degradation into L-glutamate; N-formimidoyl-L-glutamate from L-histidine: step 3/3. In terms of biological role, catalyzes the hydrolytic cleavage of the carbon-nitrogen bond in imidazolone-5-propanoate to yield N-formimidoyl-L-glutamate. It is the third step in the universal histidine degradation pathway. The sequence is that of Imidazolonepropionase from Rhizobium meliloti (strain 1021) (Ensifer meliloti).